Here is a 218-residue protein sequence, read N- to C-terminus: Probable transaldolase (218 aa).

Lys-87 functions as the Schiff-base intermediate with substrate in the catalytic mechanism.

It belongs to the transaldolase family. Type 3B subfamily.

The protein localises to the cytoplasm. The enzyme catalyses D-sedoheptulose 7-phosphate + D-glyceraldehyde 3-phosphate = D-erythrose 4-phosphate + beta-D-fructose 6-phosphate. The protein operates within carbohydrate degradation; pentose phosphate pathway; D-glyceraldehyde 3-phosphate and beta-D-fructose 6-phosphate from D-ribose 5-phosphate and D-xylulose 5-phosphate (non-oxidative stage): step 2/3. Transaldolase is important for the balance of metabolites in the pentose-phosphate pathway. This chain is Probable transaldolase, found in Cytophaga hutchinsonii (strain ATCC 33406 / DSM 1761 / CIP 103989 / NBRC 15051 / NCIMB 9469 / D465).